We begin with the raw amino-acid sequence, 410 residues long: Peptidase T (410 aa).

His79 contributes to the Zn(2+) binding site. Residue Asp81 is part of the active site. Residue Asp142 participates in Zn(2+) binding. Residue Glu176 is the Proton acceptor of the active site. Positions 177, 199, and 381 each coordinate Zn(2+).

The protein belongs to the peptidase M20B family. It depends on Zn(2+) as a cofactor.

The protein resides in the cytoplasm. It carries out the reaction Release of the N-terminal residue from a tripeptide.. Its function is as follows. Cleaves the N-terminal amino acid of tripeptides. The polypeptide is Peptidase T (Bacillus mycoides (strain KBAB4) (Bacillus weihenstephanensis)).